The primary structure comprises 156 residues: Small ribosomal subunit protein uS7 (156 aa).

The protein belongs to the universal ribosomal protein uS7 family. In terms of assembly, part of the 30S ribosomal subunit. Contacts proteins S9 and S11.

Functionally, one of the primary rRNA binding proteins, it binds directly to 16S rRNA where it nucleates assembly of the head domain of the 30S subunit. Is located at the subunit interface close to the decoding center, probably blocks exit of the E-site tRNA. The protein is Small ribosomal subunit protein uS7 of Bifidobacterium longum subsp. infantis (strain ATCC 15697 / DSM 20088 / JCM 1222 / NCTC 11817 / S12).